Here is a 729-residue protein sequence, read N- to C-terminus: Fatty acid oxidation complex subunit alpha (729 aa).

Residues 1–189 (MLYKGDTLYV…KIGLIDGIVK (189 aa)) form an enoyl-CoA hydratase/isomerase region. Residue D296 coordinates substrate. Positions 311-729 (EMPKQAAVLG…ARPVGALKTA (419 aa)) are 3-hydroxyacyl-CoA dehydrogenase. NAD(+)-binding positions include M324, D343, 400 to 402 (VVE), K407, and S429. The active-site For 3-hydroxyacyl-CoA dehydrogenase activity is H450. Residue N453 participates in NAD(+) binding. Substrate is bound by residues N500 and Y660. A disordered region spans residues 708-729 (RHNEPYYPPVEPARPVGALKTA).

This sequence in the N-terminal section; belongs to the enoyl-CoA hydratase/isomerase family. In the C-terminal section; belongs to the 3-hydroxyacyl-CoA dehydrogenase family. As to quaternary structure, heterotetramer of two alpha chains (FadB) and two beta chains (FadA).

It carries out the reaction a (3S)-3-hydroxyacyl-CoA + NAD(+) = a 3-oxoacyl-CoA + NADH + H(+). It catalyses the reaction a (3S)-3-hydroxyacyl-CoA = a (2E)-enoyl-CoA + H2O. The enzyme catalyses a 4-saturated-(3S)-3-hydroxyacyl-CoA = a (3E)-enoyl-CoA + H2O. The catalysed reaction is (3S)-3-hydroxybutanoyl-CoA = (3R)-3-hydroxybutanoyl-CoA. It carries out the reaction a (3Z)-enoyl-CoA = a 4-saturated (2E)-enoyl-CoA. It catalyses the reaction a (3E)-enoyl-CoA = a 4-saturated (2E)-enoyl-CoA. The protein operates within lipid metabolism; fatty acid beta-oxidation. Functionally, involved in the aerobic and anaerobic degradation of long-chain fatty acids via beta-oxidation cycle. Catalyzes the formation of 3-oxoacyl-CoA from enoyl-CoA via L-3-hydroxyacyl-CoA. It can also use D-3-hydroxyacyl-CoA and cis-3-enoyl-CoA as substrate. The chain is Fatty acid oxidation complex subunit alpha from Enterobacter sp. (strain 638).